Consider the following 531-residue polypeptide: METAIIAMETQLQQMLNNLQIAKNEAKEAQQKVAKLEVEISKFQSGIEMMKQFMPAITSEVCKQSVVDPSSNSEKMQEIASGKKPIAEGVSATSPEQTATGKDISKPLMADALPKSINSTNVETSPVQTVTGKDSSKPLMADALPKSINSVKTETGKKSWADIATEDEREPSSLVQLPLSGKKFYVLFNTPRKGIFSDWSQIAPLITGVKGAVHKSYPTMEAAKKALKDAEQMNGLKASSLEKLQPRVPAKKRQSIQEMVMARGGFKQNTPQNTYVFSPENRTMVNKKIFEWKKDEPNSEFYPIEIRGQTKIVLFPGADPVFAYTAYLMGYVKQIIIFEEFKFLSCFPRLFANCVEKFYNKIGRRETVINVRSSFPLLDETMKIRIPAINVAVMAMFNKQFEPFAEEIKLDIQLEDVLASIEGVYERTQKIDERSKLKVWYQSDSTILFGTSPKEIEDVDIRSLLRFEEMFKAMETGPLVNLQDEERKILCQKMQKYKGHSCQLCKSESSGPQTSEEGLQESEDEDFSVLV.

Disordered stretches follow at residues 80 to 101 (ASGK…TATG) and 505 to 531 (CKSE…SVLV). 2 stretches are compositionally biased toward polar residues: residues 91-100 (SATSPEQTAT) and 505-517 (CKSE…TSEE). Residues 518 to 531 (GLQESEDEDFSVLV) show a composition bias toward acidic residues.

It belongs to the caulimoviridae viroplasmin family.

The protein localises to the host cytoplasm. In terms of biological role, enhances the translation of downstream ORFs on polycistronic mRNAs. In Cestrum yellow leaf curling virus (CmYLCV), this protein is Transactivator/viroplasmin protein.